We begin with the raw amino-acid sequence, 390 residues long: MKETRGYGGDAPFCTRLNHSYTGMWAPERSAEARGNLTRPPGSGEDCGSVSVAFPITMLLTGFVGNALAMLLVSRSYRRRESKRKKSFLLCIGWLALTDLVGQLLTTPVVIVVYLSKQRWEHIDPSGRLCTFFGLTMTVFGLSSLFIASAMAVERALAIRAPHWYASHMKTRATRAVLLGVWLAVLAFALLPVLGVGQYTVQWPGTWCFISTGRGGNGTSSSHNWGNLFFASAFAFLGLLALTVTFSCNLATIKALVSRCRAKATASQSSAQWGRITTETAIQLMGIMCVLSVCWSPLLIMMLKMIFNQTSVEHCKTHTEKQKECNFFLIAVRLASLNQILDPWVYLLLRKILLRKFCQIRYHTNNYASSSTSLPCQCSSTLMWSDHLER.

The Extracellular portion of the chain corresponds to 1–53; that stretch reads MKETRGYGGDAPFCTRLNHSYTGMWAPERSAEARGNLTRPPGSGEDCGSVSVA. N-linked (GlcNAc...) asparagine glycans are attached at residues Asn18 and Asn36. The helical transmembrane segment at 54–78 threads the bilayer; that stretch reads FPITMLLTGFVGNALAMLLVSRSYR. Topologically, residues 79 to 91 are cytoplasmic; sequence RRESKRKKSFLLC. Residues 92–112 traverse the membrane as a helical segment; sequence IGWLALTDLVGQLLTTPVVIV. At 113–131 the chain is on the extracellular side; the sequence is VYLSKQRWEHIDPSGRLCT. The chain crosses the membrane as a helical span at residues 132-153; it reads FFGLTMTVFGLSSLFIASAMAV. Topologically, residues 154 to 175 are cytoplasmic; it reads ERALAIRAPHWYASHMKTRATR. Residues 176 to 197 form a helical membrane-spanning segment; sequence AVLLGVWLAVLAFALLPVLGVG. Over 198–227 the chain is Extracellular; the sequence is QYTVQWPGTWCFISTGRGGNGTSSSHNWGN. Residues 228–253 form a helical membrane-spanning segment; that stretch reads LFFASAFAFLGLLALTVTFSCNLATI. At 254 to 283 the chain is on the cytoplasmic side; the sequence is KALVSRCRAKATASQSSAQWGRITTETAIQ. Residues 284–307 form a helical membrane-spanning segment; that stretch reads LMGIMCVLSVCWSPLLIMMLKMIF. Residues 308–327 lie on the Extracellular side of the membrane; sequence NQTSVEHCKTHTEKQKECNF. A helical membrane pass occupies residues 328-349; that stretch reads FLIAVRLASLNQILDPWVYLLL. The Cytoplasmic segment spans residues 350 to 390; the sequence is RKILLRKFCQIRYHTNNYASSSTSLPCQCSSTLMWSDHLER.

This sequence belongs to the G-protein coupled receptor 1 family. As to quaternary structure, interacts (via C-terminus) with MKLN1. Detected in kidney. Expressed in small intestine, heart, pancreas, gastric fundic mucosa, mammary artery and pulmonary vessels.

The protein localises to the cell membrane. Functionally, receptor for prostaglandin E2 (PGE2). The activity of this receptor can couple to both the inhibition of adenylate cyclase mediated by G(i) proteins, and to an elevation of intracellular calcium. Required for normal development of fever in response to pyrinogens, including IL1B, prostaglandin E2 and bacterial lipopolysaccharide (LPS). Required for normal potentiation of platelet aggregation by prostaglandin E2, and thus plays a role in the regulation of blood coagulation. Required for increased HCO3(-) secretion in the duodenum in response to mucosal acidification, and thereby contributes to the protection of the mucosa against acid-induced ulceration. Not required for normal kidney function, normal urine volume and osmolality. The chain is Prostaglandin E2 receptor EP3 subtype (PTGER3) from Homo sapiens (Human).